The primary structure comprises 341 residues: Ferrochelatase (341 aa).

Fe cation-binding residues include His-210 and Glu-291.

This sequence belongs to the ferrochelatase family.

The protein localises to the cytoplasm. The catalysed reaction is heme b + 2 H(+) = protoporphyrin IX + Fe(2+). Its pathway is porphyrin-containing compound metabolism; protoheme biosynthesis; protoheme from protoporphyrin-IX: step 1/1. Functionally, catalyzes the ferrous insertion into protoporphyrin IX. The sequence is that of Ferrochelatase from Alcanivorax borkumensis (strain ATCC 700651 / DSM 11573 / NCIMB 13689 / SK2).